The primary structure comprises 267 residues: Undecaprenyl-diphosphatase 1 (267 aa).

The next 8 membrane-spanning stretches (helical) occupy residues 6–26, 41–60, 83–103, 109–129, 142–162, 185–205, 217–237, and 244–264; these read VLVV…AAGL, AALS…IYFW, HLLL…WLVL, LVGQ…LWGC, MSWV…VPGV, FSML…FWGL, LLMA…GMMA, and FVPF…LVYF.

Belongs to the UppP family.

It is found in the cell inner membrane. The catalysed reaction is di-trans,octa-cis-undecaprenyl diphosphate + H2O = di-trans,octa-cis-undecaprenyl phosphate + phosphate + H(+). Functionally, catalyzes the dephosphorylation of undecaprenyl diphosphate (UPP). Confers resistance to bacitracin. The polypeptide is Undecaprenyl-diphosphatase 1 (Paramagnetospirillum magneticum (strain ATCC 700264 / AMB-1) (Magnetospirillum magneticum)).